The primary structure comprises 428 residues: Serine--tRNA ligase (428 aa).

An L-serine-binding site is contributed by 231 to 233; that stretch reads TAE. 262 to 264 contacts ATP; it reads RSE. Glu-285 lines the L-serine pocket. Residue 349-352 coordinates ATP; it reads EISS. L-serine is bound at residue Ser-385.

It belongs to the class-II aminoacyl-tRNA synthetase family. Type-1 seryl-tRNA synthetase subfamily. Homodimer. The tRNA molecule binds across the dimer.

It is found in the cytoplasm. The enzyme catalyses tRNA(Ser) + L-serine + ATP = L-seryl-tRNA(Ser) + AMP + diphosphate + H(+). The catalysed reaction is tRNA(Sec) + L-serine + ATP = L-seryl-tRNA(Sec) + AMP + diphosphate + H(+). The protein operates within aminoacyl-tRNA biosynthesis; selenocysteinyl-tRNA(Sec) biosynthesis; L-seryl-tRNA(Sec) from L-serine and tRNA(Sec): step 1/1. Its function is as follows. Catalyzes the attachment of serine to tRNA(Ser). Is also able to aminoacylate tRNA(Sec) with serine, to form the misacylated tRNA L-seryl-tRNA(Sec), which will be further converted into selenocysteinyl-tRNA(Sec). In Staphylococcus aureus (strain MW2), this protein is Serine--tRNA ligase.